The sequence spans 652 residues: Pesticidal crystal protein Cry3Bb (652 aa).

The span at 1–12 (MNPNNRSEHDTI) shows a compositional bias: basic and acidic residues. 2 disordered regions span residues 1 to 33 (MNPNNRSEHDTIKVTPNSELQTNHNQYPLADNP) and 433 to 465 (KNETSTQTYDSKRNNGHVSAQDSIDQLPPETTD). The segment covering 14–33 (VTPNSELQTNHNQYPLADNP) has biased composition (polar residues).

It belongs to the delta endotoxin family. In terms of assembly, monomer.

Its function is as follows. Promotes colloidosmotic lysis by binding to the midgut epithelial cells of Coleoptera. Has moderate level of toxicity to southern corn rootworm. The sequence is that of Pesticidal crystal protein Cry3Bb (cry3Bb) from Bacillus thuringiensis.